The chain runs to 240 residues: Phosphoribosylaminoimidazole-succinocarboxamide synthase (240 aa).

The protein belongs to the SAICAR synthetase family.

It carries out the reaction 5-amino-1-(5-phospho-D-ribosyl)imidazole-4-carboxylate + L-aspartate + ATP = (2S)-2-[5-amino-1-(5-phospho-beta-D-ribosyl)imidazole-4-carboxamido]succinate + ADP + phosphate + 2 H(+). It functions in the pathway purine metabolism; IMP biosynthesis via de novo pathway; 5-amino-1-(5-phospho-D-ribosyl)imidazole-4-carboxamide from 5-amino-1-(5-phospho-D-ribosyl)imidazole-4-carboxylate: step 1/2. The protein is Phosphoribosylaminoimidazole-succinocarboxamide synthase of Wigglesworthia glossinidia brevipalpis.